The chain runs to 375 residues: MTGDTSARKLEHLKMIVSSKVESRESTLLEYVRIVHNPTPEVNLGDVSLEIDFCGGRLRAPLVITGMTGGHPDVEWINRELASVAEELGIAIGVGSQRAAIEDPSLARTFRAAREAAPNAFLIANLGAPQLSLGYSVREVRMAVEMIDADAIAIHLNPGQEAYQPEGDPFYRGVVGKIAEAAEAAGVPVIVKETGNGLSREAVAQLRALGVRCFDVAGLGGTNWIKIEVLRGRKAGSPLEAGPLQDFWGNPTAAALMEARTAAPDAYIIASGGVRNGLDAARAIALGADAAGVALPAIRSLLSGGRQATLKLLKAIEYQLKTAVYMVGETRVRGLWRAPIVVWGRLAEEAEARGIDPRWYTNTLRLEALVYKDVK.

8–9 serves as a coordination point for substrate; the sequence is RK. Residues T65, 66–68, S96, and N125 each bind FMN; that span reads GMT. Substrate is bound at residue 96–98; it reads SQR. Q160 serves as a coordination point for substrate. E161 contacts Mg(2+). FMN-binding positions include K192, T222, 273 to 275, and 294 to 295; these read GVR and AL.

The protein belongs to the IPP isomerase type 2 family. As to quaternary structure, homooctamer. Dimer of tetramers. The cofactor is FMN. Requires NADPH as cofactor. Mg(2+) is required as a cofactor.

It localises to the cytoplasm. It catalyses the reaction isopentenyl diphosphate = dimethylallyl diphosphate. Involved in the biosynthesis of isoprenoids. Catalyzes the 1,3-allylic rearrangement of the homoallylic substrate isopentenyl (IPP) to its allylic isomer, dimethylallyl diphosphate (DMAPP). This chain is Isopentenyl-diphosphate delta-isomerase, found in Aeropyrum pernix (strain ATCC 700893 / DSM 11879 / JCM 9820 / NBRC 100138 / K1).